A 100-amino-acid polypeptide reads, in one-letter code: RNA-binding protein YlxQ (100 aa).

This sequence belongs to the eukaryotic ribosomal protein eL8 family.

RNA-binding protein that recognizes the K-turn motif present in ribosomal RNA, but also in box C/D and box C'/D' sRNAs. This is RNA-binding protein YlxQ from Bacillus subtilis (strain 168).